Reading from the N-terminus, the 745-residue chain is Putative cryptochrome DASH, mitochondrial (745 aa).

The transit peptide at 1-22 (MAPSKVVIYAMRRELRLSDNPI) directs the protein to the mitochondrion. In terms of domain architecture, Photolyase/cryptochrome alpha/beta spans 23-166 (FHHLSNPESK…DFKLWDDEKY (144 aa)). 2 disordered regions span residues 563–688 (KFNL…GGGG) and 702–745 (GGYR…QTDA). Residues 571-584 (SKVKKRPFFRKRGT) are compositionally biased toward basic residues. The segment covering 591–603 (GSAESPGSSDSHS) has biased composition (low complexity). Residues 604-616 (GSGGSPDGSGGGN) show a composition bias toward gly residues. Residues 632–648 (QQTHQGSGRSQSSSNHG) show a composition bias toward low complexity. 2 stretches are compositionally biased toward gly residues: residues 672–688 (RGGG…GGGG) and 702–718 (GGYR…GGFR). Residues 735–745 (QQVASQFQTDA) show a composition bias toward polar residues.

This sequence belongs to the DNA photolyase class-1 family. The cofactor is FAD. Requires (6R)-5,10-methylene-5,6,7,8-tetrahydrofolate as cofactor.

Its subcellular location is the mitochondrion. Functionally, may have a photoreceptor function. The polypeptide is Putative cryptochrome DASH, mitochondrial (cry) (Neurospora crassa (strain ATCC 24698 / 74-OR23-1A / CBS 708.71 / DSM 1257 / FGSC 987)).